A 584-amino-acid polypeptide reads, in one-letter code: Cation channel sperm-associated protein 2 (584 aa).

The Cytoplasmic portion of the chain corresponds to 1–106 (MAHERGHLQL…LWAGWVLDSS (106 aa)). A helical membrane pass occupies residues 107–129 (IFSNFIISLIFLNTFVLMVEIEL). Residues 130–138 (MNSTNTSLW) lie on the Extracellular side of the membrane. A helical transmembrane segment spans residues 139–164 (PLKLALEVTDWFILLSFIVEILLMWL). Over 165-173 (ASFFLFWKN) the chain is Cytoplasmic. Residues 174-198 (AWSVFDFVVTMLSLLPEFVVLIGVS) traverse the membrane as a helical segment. Topologically, residues 199 to 201 (ADS) are extracellular. Residues 202–220 (VWLQLLRVSRVLRSLKLFA) form a helical membrane-spanning segment. Topologically, residues 221 to 237 (RFPQIKVILLALVRALK) are cytoplasmic. Residues 238–260 (SMTFLLMLLLIFFYVFAVAGVYF) form a helical membrane-spanning segment. Over 261–279 (FKEYSRSTIENLEYNMFFS) the chain is Extracellular. Residues 280 to 292 (DLLNSLVTVFILF) constitute an intramembrane region (helical; Pore-forming). Residues 293 to 312 (TLDHWYAVLQDVWKVPEASR) are Extracellular-facing. The helical transmembrane segment at 313-339 (VFSSIYVILWLLLGSIIFRNIIVAMMV) threads the bilayer. At 340–584 (TNFQNIRNEL…VQALMNFEDK (245 aa)) the chain is on the cytoplasmic side. Over residues 376–386 (SESLRGTSQGK) the composition is skewed to polar residues. 2 disordered regions span residues 376–460 (SESL…KGYT) and 480–510 (AGKA…HDEA). 2 stretches are compositionally biased toward acidic residues: residues 390 to 418 (DITE…EEKS) and 426 to 443 (EKND…EEKS). Basic and acidic residues-rich tracts occupy residues 444 to 460 (DVEK…KGYT) and 483 to 496 (AENE…KEKA).

The protein belongs to the cation channel sperm-associated (TC 1.A.1.19) family. Component of the CatSper complex or CatSpermasome composed of the core pore-forming members CATSPER1, CATSPER2, CATSPER3 and CATSPER4 as well as auxiliary members CATSPERB, CATSPERG, CATSPERD, CATSPERE, CATSPERZ, C2CD6/CATSPERT, SLCO6C1, TMEM249, TMEM262 and EFCAB9. HSPA1 may be an additional auxiliary complex member. The core complex members CATSPER1, CATSPER2, CATSPER3 and CATSPER4 form a heterotetrameric channel. The auxiliary CATSPERB, CATSPERG, CATSPERD and CATSPERE subunits form a pavilion-like structure over the pore which stabilizes the complex through interactions with CATSPER4, CATSPER3, CATSPER1 and CATSPER2 respectively. SLCO6C1 interacts with CATSPERE and TMEM262/CATSPERH interacts with CATSPERB, further stabilizing the complex. C2CD6/CATSPERT interacts at least with CATSPERD and is required for targeting the CatSper complex in the flagellar membrane. Interacts with Ca(v)3.3/CACNA1I, leading to suppression of T-type calcium channel activity.

It localises to the cell projection. The protein resides in the cilium. Its subcellular location is the flagellum membrane. The catalysed reaction is Ca(2+)(in) = Ca(2+)(out). With respect to regulation, activated by intracellular alkalinization. Its function is as follows. Pore-forming subunit of the CatSper complex, a sperm-specific voltage-gated calcium channel that plays a central role in sperm cell hyperactivation. Controls calcium entry to mediate the hyperactivated motility, a step needed for sperm motility which is essential late in the preparation of sperm for fertilization. The polypeptide is Cation channel sperm-associated protein 2 (Catsper2) (Rattus norvegicus (Rat)).